The primary structure comprises 49 residues: uncharacterized protein (49 aa).

A helical transmembrane segment spans residues 6 to 28 (IYPLTVFYFFAIEMSVFCYYNWF).

Its subcellular location is the membrane. This is an uncharacterized protein from Saccharomyces cerevisiae (strain ATCC 204508 / S288c) (Baker's yeast).